The following is a 461-amino-acid chain: V-type ATP synthase beta chain (461 aa).

It belongs to the ATPase alpha/beta chains family.

Functionally, produces ATP from ADP in the presence of a proton gradient across the membrane. The V-type beta chain is a regulatory subunit. The sequence is that of V-type ATP synthase beta chain from Clostridium botulinum (strain 657 / Type Ba4).